The sequence spans 334 residues: Formamidase (334 aa).

Positions 14-260 constitute a CN hydrolase domain; sequence FLVAAIQFPV…WEIVTGEIYP (247 aa). The Proton acceptor role is filled by Glu-60. Catalysis depends on Lys-133, which acts as the Proton donor. Cys-166 acts as the Nucleophile in catalysis.

It belongs to the carbon-nitrogen hydrolase superfamily. Aliphatic amidase family.

The enzyme catalyses formamide + H2O = formate + NH4(+). Is an aliphatic amidase with a restricted substrate specificity, as it only hydrolyzes formamide. The protein is Formamidase of Helicobacter acinonychis (strain Sheeba).